A 102-amino-acid chain; its full sequence is NADH-quinone oxidoreductase subunit K (102 aa).

Helical transmembrane passes span 5–25 (ITHYLIVSALIFTIGIAGIFL), 31–51 (IIILMSIELILLSVNLNFVAF), and 66–86 (FILTVAAAEAAIGLAILVVFF).

This sequence belongs to the complex I subunit 4L family. NDH-1 is composed of 14 different subunits. Subunits NuoA, H, J, K, L, M, N constitute the membrane sector of the complex.

The protein localises to the cell inner membrane. It catalyses the reaction a quinone + NADH + 5 H(+)(in) = a quinol + NAD(+) + 4 H(+)(out). In terms of biological role, NDH-1 shuttles electrons from NADH, via FMN and iron-sulfur (Fe-S) centers, to quinones in the respiratory chain. The immediate electron acceptor for the enzyme in this species is believed to be ubiquinone. Couples the redox reaction to proton translocation (for every two electrons transferred, four hydrogen ions are translocated across the cytoplasmic membrane), and thus conserves the redox energy in a proton gradient. This chain is NADH-quinone oxidoreductase subunit K, found in Bartonella quintana (strain Toulouse) (Rochalimaea quintana).